Here is a 251-residue protein sequence, read N- to C-terminus: Small ribosomal subunit protein uS2 (251 aa).

Belongs to the universal ribosomal protein uS2 family.

This is Small ribosomal subunit protein uS2 (rpsB) from Arthrospira platensis (Spirulina platensis).